Here is a 213-residue protein sequence, read N- to C-terminus: CDP-diacylglycerol--inositol 3-phosphatidyltransferase (213 aa).

Residues 1–5 lie on the Cytoplasmic side of the membrane; it reads MPDEN. Residues 6-26 traverse the membrane as a helical segment; sequence IFLFVPNLIGYARIVFAIISF. Residue tyrosine 27 is a topological domain, lumenal. Residues 28-48 traverse the membrane as a helical segment; that stretch reads FMPCCPLTASSFYLLSGLLDA. Positions 47 and 50 each coordinate Mg(2+). Topologically, residues 49–73 are cytoplasmic; sequence FDGHAARALNQGTRFGAMLDMLTDR. 3 residues coordinate a CDP-1,2-diacyl-sn-glycerol: glycine 51, arginine 55, and threonine 61. The Mg(2+) site is built by aspartate 68 and aspartate 72. The Proton acceptor role is filled by aspartate 72. The helical transmembrane segment at 74–94 threads the bilayer; it reads CSTMCLLVNLALLYPGATLFF. A topological domain (lumenal) is located at residue glutamine 95. The helical transmembrane segment at 96-116 threads the bilayer; that stretch reads ISMSLDVASHWLHLHSSVVRG. Over 117 to 139 the chain is Cytoplasmic; it reads SESHKMIDLSGNPVLRIYYTSRP. A helical membrane pass occupies residues 140-160; that stretch reads ALFTLCAGNELFYCLLYLFHF. The Lumenal portion of the chain corresponds to 161-174; sequence SEGPLVGSVGLFRM. A helical transmembrane segment spans residues 175-195; that stretch reads GLWVTAPIALLKSLISVIHLI. At 196 to 213 the chain is on the cytoplasmic side; it reads TAARNMAALDAADRAKKK.

The protein belongs to the CDP-alcohol phosphatidyltransferase class-I family. The cofactor is Mn(2+). It depends on Mg(2+) as a cofactor. As to expression, detected in placenta (at protein level). Widely expressed. Higher expression in adult liver and skeletal muscle, slightly lower levels seen in pancreas, kidney, lung, placenta, brain, heart, leukocyte, colon, small intestine, ovary, testis, prostate, thymus and spleen. In fetus, expressed in kidney, liver, lung and brain.

It localises to the endoplasmic reticulum membrane. Its subcellular location is the cell membrane. It carries out the reaction a CDP-1,2-diacyl-sn-glycerol + myo-inositol = a 1,2-diacyl-sn-glycero-3-phospho-(1D-myo-inositol) + CMP + H(+). With respect to regulation, inhibited by PtdIns (product inhibition), phosphatidylinositol phosphate, and nucleoside di- and tri-phosphates. Catalyzes the biosynthesis of phosphatidylinositol (PtdIns) as well as PtdIns:inositol exchange reaction. May thus act to reduce an excessive cellular PtdIns content. The exchange activity is due to the reverse reaction of PtdIns synthase and is dependent on CMP, which is tightly bound to the enzyme. The protein is CDP-diacylglycerol--inositol 3-phosphatidyltransferase of Homo sapiens (Human).